The primary structure comprises 943 residues: Receptor-like kinase TMK3 (943 aa).

A signal peptide spans 1-24; sequence MSNSHLGTLCFIISLLGLANFSLS. The Extracellular portion of the chain corresponds to 25 to 482; sequence QTGLDDSTMQ…ETSKKSSNVK (458 aa). An N-linked (GlcNAc...) asparagine glycan is attached at Asn41. An intrachain disulfide couples Cys54 to Cys61. LRR repeat units lie at residues 64–88, 89–111, 112–134, 136–160, 162–183, 186–210, 212–232, 233–254, 255–279, and 281–301; these read SNRVTKIQLKQKGIRGTLPTNLQSL, SELVILELFLNRISGPIPDLSGL, SRLQTLNLHDNLFTSVPKNLFSG, SSLQEMYLENNPFDPWVIPDTVKEA, SLQNLTLSNCSIIGKIPDFFGS, LPSLTNLKLSQNGLEGELPMSFAGT, IQSLFLNGQKLNGSISVLGNM, TSLVEVSLQGNQFSGPIPDLSG, LVSLRVFNVRENQLTGVVPQSLVSL, and SLTTVNLTNNYLQGPTPLFGK. 2 N-linked (GlcNAc...) asparagine glycosylation sites follow: Asn165 and Asn170. N-linked (GlcNAc...) asparagine glycans are attached at residues Asn223 and Asn231. N-linked (GlcNAc...) asparagine glycosylation is present at Asn286. Intrachain disulfides connect Cys315-Cys323 and Cys353-Cys361. 3 LRR repeats span residues 363 to 386, 387 to 410, and 411 to 438; these read GGNITVVNMRKQDLSGTISPSLAK, LTSLETINLADNKLSGHIPDELTT, and LSKLRLLDVSNNDFYGIPPKFRDTVTLV. Asn365 carries N-linked (GlcNAc...) asparagine glycosylation. The disordered stretch occupies residues 441 to 476; the sequence is GNANMGKNGPNKTSDAPGASPGSKPSGGSDGSETSK. Asn451 carries N-linked (GlcNAc...) asparagine glycosylation. A compositionally biased stretch (low complexity) spans 454-467; the sequence is SDAPGASPGSKPSG. Residues 483–503 form a helical membrane-spanning segment; sequence IIVPVVGGVVGALCLVGLGVC. Topologically, residues 504 to 943 are cytoplasmic; the sequence is LYAKKRKRPA…ADSFTSVDGR (440 aa). The tract at residues 514-534 is disordered; it reads RVQSPSSNMVIHPHHSGDNDD. The Protein kinase domain occupies 585–866; the sequence is FSEENILGRG…AHIVNVLSSL (282 aa). ATP is bound by residues 591–599 and Lys613; that span reads LGRGGFGTV. Residue Asp714 is the Proton acceptor of the active site. The interval 904 to 943 is disordered; it reads QTADDSGSSSSAYGSKDNTQTSIPTRPSGFADSFTSVDGR. Over residues 906-918 the composition is skewed to low complexity; the sequence is ADDSGSSSSAYGS. Residues 919–928 show a composition bias toward polar residues; that stretch reads KDNTQTSIPT.

This sequence belongs to the protein kinase superfamily. Ser/Thr protein kinase family. Expressed in roots, leaves, stems, siliques and flowers.

The protein resides in the membrane. The catalysed reaction is L-seryl-[protein] + ATP = O-phospho-L-seryl-[protein] + ADP + H(+). It catalyses the reaction L-threonyl-[protein] + ATP = O-phospho-L-threonyl-[protein] + ADP + H(+). Its function is as follows. Involved in auxin signal transduction and cell expansion and proliferation regulation. The polypeptide is Receptor-like kinase TMK3 (Arabidopsis thaliana (Mouse-ear cress)).